Consider the following 802-residue polypeptide: Outer membrane usher protein PefC (802 aa).

Residues 1-24 form the signal peptide; sequence MSFHHRVFKLSALSLALFSHLSFA. A disulfide bridge connects residues Cys782 and Cys801.

This sequence belongs to the fimbrial export usher family.

Its subcellular location is the cell outer membrane. In terms of biological role, involved in the export and assembly of FimA fimbrial subunits across the outer membrane. This is Outer membrane usher protein PefC (pefC) from Salmonella typhimurium (strain LT2 / SGSC1412 / ATCC 700720).